The sequence spans 388 residues: 3-amino-5-hydroxybenzoate synthase (388 aa).

Lys188 is modified (N6-(pyridoxal phosphate)lysine).

The protein belongs to the degT/dnrJ/eryC1 family. In terms of assembly, homodimer. Can interact with RifL. Requires pyridoxal 5'-phosphate as cofactor.

The enzyme catalyses 5-deoxy-5-amino-3-dehydroshikimate = 3-amino-5-hydroxybenzoate + H2O + H(+). It carries out the reaction UDP-3-oxo-alpha-D-glucose + L-glutamine = UDP-alpha-D-kanosamine + 2-oxoglutaramate. The protein operates within antibiotic biosynthesis; rifamycin B biosynthesis. AHBA synthase activity is activated by 3-deoxy-D-arabinoheptulosonic acid 7-phosphate (DAHP), an intermediate in the shikimate pathway, and is irreversibly inhibited by gabaculine (5-amino-1,3-cyclohexadiene-1-carboxylate). Catalyzes the dehydration and aromatization of 5-amino-5-deoxy-3-dehydroshikimate (aminoDHS) to 3-amino-5-hydroxybenzoate (AHBA), a compound that then serves as the starter unit for the assembly of a polyketide during the biosynthesis of rifamycin B and other ansamycin antibiotics. Cannot utilize 5-deoxy-5-amino-3-dehydroquinate (aminoDHQ), 5-deoxy-5-aminoshikimate (aminoSA), quinate, 3-dehydroquinate, or 3-dehydroshikimate (DHS) as substrate. Its function is as follows. In a complex with RifL, RifK may have a second function in the AHBA pathway, acting as a transaminase introducing the nitrogen into the first pathway intermediate, UDP-3-keto-D-glucose, to give UDP-kanosamine. Appears to use glutamine as the nitrogen donor; NH(4)(+) or asparagine are 30% less effective as nitrogen donors and neither glutamate nor aspartate show activity. In Amycolatopsis mediterranei (strain S699) (Nocardia mediterranei), this protein is 3-amino-5-hydroxybenzoate synthase (rifK).